Consider the following 61-residue polypeptide: Large ribosomal subunit protein uL30 (61 aa).

It belongs to the universal ribosomal protein uL30 family. Part of the 50S ribosomal subunit.

The polypeptide is Large ribosomal subunit protein uL30 (Frankia casuarinae (strain DSM 45818 / CECT 9043 / HFP020203 / CcI3)).